The sequence spans 157 residues: Succinate dehydrogenase assembly factor 2-B, mitochondrial (157 aa).

The N-terminal 24 residues, 1-24, are a transit peptide targeting the mitochondrion; that stretch reads MLRQFLFSTASRRLVRPMIAPHRS.

This sequence belongs to the SDHAF2 family. In terms of assembly, interacts with the flavoprotein subunit within the SDH catalytic dimer.

The protein localises to the mitochondrion matrix. In terms of biological role, plays an essential role in the assembly of succinate dehydrogenase (SDH), an enzyme complex (also referred to as respiratory complex II) that is a component of both the tricarboxylic acid (TCA) cycle and the mitochondrial electron transport chain, and which couples the oxidation of succinate to fumarate with the reduction of ubiquinone (coenzyme Q) to ubiquinol. Required for flavinylation (covalent attachment of FAD) of the flavoprotein subunit of the SDH catalytic dimer. The chain is Succinate dehydrogenase assembly factor 2-B, mitochondrial from Drosophila persimilis (Fruit fly).